The following is a 402-amino-acid chain: MGIYDIFDDESARSISGMSIDEMAKKYGTPVIIYSRARIVSNIRRIREAYENRVRMLYSVKANDNPRIIEIMHQESIGSDSASPMEIMMSIFSGIPPEDILYSPNNASEYDLNFALDRGIAINFNTFTQYRKMREKPERISFRINPGFGMGEFAGTTTGGARTKFGIDPDAAILAYRKAREDGIREFGIHMMIGSNNRDHVKIAEAYSNFFRIADRIGREAGVSFQFADVGGGLGIPYVQGENELDIAALGSAVLKEFDRYHFGDLVLEPGRYLVGDAGIIVGTVNDVHNGFAGTDIGMNLNIRPALYGARHTIIPVGERVEGEKITVTGQICENTDRIGDTAWRLSEGDRIMVLDAGAYVYSMSSRYNGRPRPPEIMIMEDGKDVMIRRREDFSDFIATVV.

Lys61 carries the post-translational modification N6-(pyridoxal phosphate)lysine. Pyridoxal 5'-phosphate-binding positions include Gly233 and 269 to 272 (EPGR). Arg272, Arg304, Tyr308, Glu334, and Tyr360 together coordinate substrate. Pyridoxal 5'-phosphate is bound at residue Tyr360.

The protein belongs to the Orn/Lys/Arg decarboxylase class-II family. LysA subfamily. Homodimer. Pyridoxal 5'-phosphate serves as cofactor.

It catalyses the reaction meso-2,6-diaminopimelate + H(+) = L-lysine + CO2. It participates in amino-acid biosynthesis; L-lysine biosynthesis via DAP pathway; L-lysine from DL-2,6-diaminopimelate: step 1/1. Functionally, specifically catalyzes the decarboxylation of meso-diaminopimelate (meso-DAP) to L-lysine. The polypeptide is Diaminopimelate decarboxylase (Thermoplasma acidophilum (strain ATCC 25905 / DSM 1728 / JCM 9062 / NBRC 15155 / AMRC-C165)).